The following is a 783-amino-acid chain: E3 UFM1-protein ligase 1 homolog (783 aa).

Residues 406 to 476 (TLGTTHDADE…DAVQQSANSS (71 aa)) form a disordered region. The segment covering 446 to 457 (KSTKKHQRGRAA) has biased composition (basic residues).

It belongs to the UFL1 family.

E3 UFM1-protein ligase that mediates ufmylation of target proteins. This is E3 UFM1-protein ligase 1 homolog from Drosophila grimshawi (Hawaiian fruit fly).